Here is a 91-residue protein sequence, read N- to C-terminus: Large ribosomal subunit protein uL23c (91 aa).

Belongs to the universal ribosomal protein uL23 family. Part of the 50S ribosomal subunit.

Its subcellular location is the plastid. The protein resides in the chloroplast. In terms of biological role, binds to 23S rRNA. The protein is Large ribosomal subunit protein uL23c (rpl23) of Marchantia polymorpha (Common liverwort).